A 480-amino-acid polypeptide reads, in one-letter code: Lysostaphin (480 aa).

Residues 1-23 form the signal peptide; the sequence is MKKTKNNYYTTPLAIGLSTFALA. A propeptide spanning residues 24–234 is cleaved from the precursor; sequence SIVYGGIQNE…ALVQNRTALR (211 aa). Tandem repeats lie at residues 49-61, 62-74, 75-87, 88-100, 101-113, 114-126, 127-139, 140-152, 153-165, 166-178, 179-191, 192-204, and 205-217. A 14 X 13 AA tandem repeats of A-E-V-E-T-S-K-[AP]-P-V-E-N-T region spans residues 49-230; sequence AEVETSKPPV…ETSKALVQNR (182 aa). A disordered region spans residues 51 to 219; that stretch reads VETSKPPVEN…SKAPVENTAE (169 aa). The stretch at 218–230 is one 14; approximate repeat; it reads AEVETSKALVQNR. Residues histidine 266 and aspartate 270 each coordinate Zn(2+). The active site involves histidine 347. Residue histidine 349 participates in Zn(2+) binding. In terms of domain architecture, SH3b spans 400–468; sequence SESASFTPNT…YLPVRTWNKS (69 aa).

The protein belongs to the peptidase M23B family. Monomer. The cofactor is Zn(2+).

The protein resides in the secreted. It catalyses the reaction Hydrolysis of the -Gly-|-Gly- bond in the pentaglycine inter-peptide link joining staphylococcal cell wall peptidoglycans.. Lyses staphylococcal cells by hydrolyzing the polyglycine interpeptide bridges of the peptidoglycan. In Staphylococcus staphylolyticus, this protein is Lysostaphin (lss).